Reading from the N-terminus, the 127-residue chain is Mini-ribonuclease 3-like protein (127 aa).

D19 is a catalytic residue.

It belongs to the MrnC RNase family.

Its function is as follows. Might be a ribonuclease involved in RNA processing. The sequence is that of Mini-ribonuclease 3-like protein (mrnCL) from Ilyobacter polytropus (strain ATCC 51220 / DSM 2926 / LMG 16218 / CuHBu1).